A 659-amino-acid polypeptide reads, in one-letter code: MAETAKTAVLQEETRIFNTPQWIIEYSNSYQWMKKKGFKTEKEMREWCAQNYLDFWDEMAQTYADWFKPYTQILEWNPPYAKWFLGGKCNVAHNAVDRHAKSWRRNKVAYYFVGEPVGDTKTITYYQLYQAVNKMANGLKSLGVKKGDRVSIYLPMIPELPITMLACAKIGAIHSVVFSGFSAGGLQSRVTDAEAKVVVTSDGFYRRGKPLPLKPNVDEAVQNAPSVEKVVVVKRVGLDVPMKEGRDIWYHDLVKDQPAECYTEELDPEDRLFILYTSGTTGKPKGIEHAHGGFCVGPAYTTAWALDVHEEDVYWCTADCGWITGHSYVVYGPLCLGATSILYEGAPDYPDIGRWWSIIEEYGVSVFYTAPTAIRMFMKAGDQWPKKYNLKSIRILASVGEPLNPEAYVWFRNNIGGGQAPIIDTWWQTETGCHVIAPLPMTPEKPGSVAFPLPGFNTDIYDEDGNSVPLGYGGNIVQKTPWPSMLRAFFRDPERYMKEYWQMYWDIKPGTYLAGDKATRDKDGYWWIQGRIDDVLKVAGHRISNAEVESAAVSHPAVAEAAVIGKPDEVKGEVIVAFIILKEGVQESEDLKKDIAKHVRSVLGPVAYPEIVYFVKDVPKTRSGKIMRRVIKAKALGKPVGDISALANPESVENIPLIV.

CoA-binding positions include 206–209 (RRGK) and Thr324. ATP-binding positions include 400–402 (GEP), 424–429 (DTWWQT), Asp516, Arg531, and Arg542. 2 residues coordinate Mg(2+): Val553 and His555. Arg600 contributes to the CoA binding site.

It belongs to the ATP-dependent AMP-binding enzyme family. Mg(2+) serves as cofactor.

It carries out the reaction acetate + ATP + CoA = acetyl-CoA + AMP + diphosphate. Its function is as follows. Catalyzes the conversion of acetate into acetyl-CoA (AcCoA), an essential intermediate at the junction of anabolic and catabolic pathways. AcsA undergoes a two-step reaction. In the first half reaction, AcsA combines acetate with ATP to form acetyl-adenylate (AcAMP) intermediate. In the second half reaction, it can then transfer the acetyl group from AcAMP to the sulfhydryl group of CoA, forming the product AcCoA. This chain is Acetyl-coenzyme A synthetase (acsA), found in Methanothrix thermoacetophila (strain DSM 6194 / JCM 14653 / NBRC 101360 / PT) (Methanosaeta thermophila).